We begin with the raw amino-acid sequence, 72 residues long: Translational regulator CsrA (72 aa).

It belongs to the CsrA/RsmA family. As to quaternary structure, homodimer; the beta-strands of each monomer intercalate to form a hydrophobic core, while the alpha-helices form wings that extend away from the core.

The protein localises to the cytoplasm. Its function is as follows. A translational regulator that binds mRNA to regulate translation initiation and/or mRNA stability. Usually binds in the 5'-UTR at or near the Shine-Dalgarno sequence preventing ribosome-binding, thus repressing translation. Its main target seems to be the major flagellin gene, while its function is anatagonized by FliW. This is Translational regulator CsrA from Clostridium botulinum (strain Okra / Type B1).